Consider the following 450-residue polypeptide: Salicylate synthase (450 aa).

The Proton donor role is filled by Glu252. 270-271 (GT) serves as a coordination point for substrate. Glu297 lines the Mg(2+) pocket. Substrate contacts are provided by residues Tyr385, Arg405, and 419–421 (GAG). Residues Glu431 and Glu434 each contribute to the Mg(2+) site. Lys438 serves as a coordination point for substrate.

It belongs to the anthranilate synthase component I family. Salicylate synthase subfamily. Monomer. Mg(2+) is required as a cofactor.

It carries out the reaction chorismate = isochorismate. The catalysed reaction is isochorismate = salicylate + pyruvate. It catalyses the reaction chorismate = prephenate. It functions in the pathway siderophore biosynthesis; mycobactin biosynthesis. Involved in the incorporation of salicylate into the virulence-conferring salicylate-based siderophore mycobactin. Catalyzes the initial conversion of chorismate to yield the intermediate isochorismate (isochorismate synthase activity), and the subsequent elimination of the enolpyruvyl side chain in a lyase reaction to give salicylate (isochorismate pyruvate-lyase activity). In the absence of magnesium, MbtI displays a chorismate mutase activity and converts chorismate to prephenate. In Mycolicibacterium paratuberculosis (strain ATCC BAA-968 / K-10) (Mycobacterium paratuberculosis), this protein is Salicylate synthase (mbtI).